The following is an 881-amino-acid chain: Alanine--tRNA ligase (881 aa).

Residues His-564, His-568, Cys-673, and His-677 each contribute to the Zn(2+) site. A disordered region spans residues 848 to 867 (GQGGGGRPDMAQAGGPDGDK).

This sequence belongs to the class-II aminoacyl-tRNA synthetase family. Zn(2+) serves as cofactor.

The protein localises to the cytoplasm. The enzyme catalyses tRNA(Ala) + L-alanine + ATP = L-alanyl-tRNA(Ala) + AMP + diphosphate. Catalyzes the attachment of alanine to tRNA(Ala) in a two-step reaction: alanine is first activated by ATP to form Ala-AMP and then transferred to the acceptor end of tRNA(Ala). Also edits incorrectly charged Ser-tRNA(Ala) and Gly-tRNA(Ala) via its editing domain. This chain is Alanine--tRNA ligase, found in Hyphomonas neptunium (strain ATCC 15444).